The chain runs to 98 residues: Feather keratin (98 aa).

N-acetylalanine is present on alanine 1.

The protein belongs to the avian keratin family. As to quaternary structure, the avian keratins (F-ker, S-ker, C-ker and B-ker) are a complex mixture of very similar polypeptides.

The polypeptide is Feather keratin (Chroicocephalus novaehollandiae (Silver gull)).